The primary structure comprises 172 residues: 3-hydroxydecanoyl-[acyl-carrier-protein] dehydratase (172 aa).

The active site involves His71.

Belongs to the thioester dehydratase family. FabA subfamily. As to quaternary structure, homodimer.

The protein resides in the cytoplasm. It catalyses the reaction a (3R)-hydroxyacyl-[ACP] = a (2E)-enoyl-[ACP] + H2O. The enzyme catalyses (3R)-hydroxydecanoyl-[ACP] = (2E)-decenoyl-[ACP] + H2O. The catalysed reaction is (2E)-decenoyl-[ACP] = (3Z)-decenoyl-[ACP]. Its pathway is lipid metabolism; fatty acid biosynthesis. Functionally, necessary for the introduction of cis unsaturation into fatty acids. Catalyzes the dehydration of (3R)-3-hydroxydecanoyl-ACP to E-(2)-decenoyl-ACP and then its isomerization to Z-(3)-decenoyl-ACP. Can catalyze the dehydratase reaction for beta-hydroxyacyl-ACPs with saturated chain lengths up to 16:0, being most active on intermediate chain length. This Edwardsiella ictaluri (strain 93-146) protein is 3-hydroxydecanoyl-[acyl-carrier-protein] dehydratase.